We begin with the raw amino-acid sequence, 126 residues long: uncharacterized protein (126 aa).

The disordered stretch occupies residues 1-101; it reads MQASSEPANV…KSVGSQSADE (101 aa). Composition is skewed to polar residues over residues 14-27 and 86-99; these read GQNQ…STSP and DTEA…SQSA.

This is an uncharacterized protein from Schizosaccharomyces pombe (strain 972 / ATCC 24843) (Fission yeast).